The primary structure comprises 408 residues: Succinylornithine transaminase (408 aa).

Lys252 bears the N6-(pyridoxal phosphate)lysine mark.

The protein belongs to the class-III pyridoxal-phosphate-dependent aminotransferase family. AstC subfamily. Pyridoxal 5'-phosphate serves as cofactor.

It catalyses the reaction N(2)-succinyl-L-ornithine + 2-oxoglutarate = N-succinyl-L-glutamate 5-semialdehyde + L-glutamate. It participates in amino-acid degradation; L-arginine degradation via AST pathway; L-glutamate and succinate from L-arginine: step 3/5. In terms of biological role, catalyzes the transamination of N(2)-succinylornithine and alpha-ketoglutarate into N(2)-succinylglutamate semialdehyde and glutamate. Can also act as an acetylornithine aminotransferase. In Salmonella newport (strain SL254), this protein is Succinylornithine transaminase.